The primary structure comprises 435 residues: Serine--tRNA ligase (435 aa).

238-240 (TAE) serves as a coordination point for L-serine. Residue 269-271 (RAE) coordinates ATP. An L-serine-binding site is contributed by E292. 356 to 359 (EISS) contacts ATP. Position 392 (S392) interacts with L-serine.

It belongs to the class-II aminoacyl-tRNA synthetase family. Type-1 seryl-tRNA synthetase subfamily. In terms of assembly, homodimer. The tRNA molecule binds across the dimer.

It localises to the cytoplasm. It catalyses the reaction tRNA(Ser) + L-serine + ATP = L-seryl-tRNA(Ser) + AMP + diphosphate + H(+). It carries out the reaction tRNA(Sec) + L-serine + ATP = L-seryl-tRNA(Sec) + AMP + diphosphate + H(+). It functions in the pathway aminoacyl-tRNA biosynthesis; selenocysteinyl-tRNA(Sec) biosynthesis; L-seryl-tRNA(Sec) from L-serine and tRNA(Sec): step 1/1. Catalyzes the attachment of serine to tRNA(Ser). Is also able to aminoacylate tRNA(Sec) with serine, to form the misacylated tRNA L-seryl-tRNA(Sec), which will be further converted into selenocysteinyl-tRNA(Sec). The protein is Serine--tRNA ligase of Methylobacterium sp. (strain 4-46).